The chain runs to 62 residues: MGVPKKRTSKMRRDRRRAANNNLRSAVQVTKCPNCKEPVMPHRACTSCGQYKGREVVAQAEA.

The span at 1-18 shows a compositional bias: basic residues; it reads MGVPKKRTSKMRRDRRRA. The interval 1–22 is disordered; that stretch reads MGVPKKRTSKMRRDRRRAANNN.

This sequence belongs to the bacterial ribosomal protein bL32 family.

The protein is Large ribosomal subunit protein bL32 of Myxococcus xanthus (strain DK1622).